Consider the following 351-residue polypeptide: Glycerol-1-phosphate dehydrogenase [NAD(P)+] (351 aa).

Residues 97–101 and 119–122 each bind NAD(+); these read GKVID and TSPS. Position 124 (D124) interacts with substrate. S128 serves as a coordination point for NAD(+). Position 171 (D171) interacts with substrate. D171 and H251 together coordinate Zn(2+). H255 is a substrate binding site. Residue H267 coordinates Zn(2+).

This sequence belongs to the glycerol-1-phosphate dehydrogenase family. Homodimer. Requires Zn(2+) as cofactor.

It localises to the cytoplasm. It catalyses the reaction sn-glycerol 1-phosphate + NAD(+) = dihydroxyacetone phosphate + NADH + H(+). The catalysed reaction is sn-glycerol 1-phosphate + NADP(+) = dihydroxyacetone phosphate + NADPH + H(+). The protein operates within membrane lipid metabolism; glycerophospholipid metabolism. Functionally, catalyzes the NAD(P)H-dependent reduction of dihydroxyacetonephosphate (DHAP or glycerone phosphate) to glycerol 1-phosphate (G1P). The G1P thus generated is used as the glycerophosphate backbone of phospholipids in the cellular membranes of Archaea. The protein is Glycerol-1-phosphate dehydrogenase [NAD(P)+] of Saccharolobus solfataricus (strain ATCC 35092 / DSM 1617 / JCM 11322 / P2) (Sulfolobus solfataricus).